The sequence spans 228 residues: MDRAVSTTTNAVEWAKAPGLTDYPSALAEMQARAAAIRAGEEAERVWLVEHPPLYTAGTSARDADLLHPGDAQVFRSGRGGQWTYHGPGQRVAYVMLDLSRPHGRVPARDVRGFVAGLEAWLIDTLAGFGVRGELREGRVGIWVANPLGGESKIAAIGVRVSRWVSYHGIALNVAPDLGRFGGIVPCGISEHGVTSLAALGVAATLDAVDAALARSFERVFDAAPQPV.

A BPL/LPL catalytic domain is found at 40–225 (GEEAERVWLV…SFERVFDAAP (186 aa)). Residues 79-86 (RGGQWTYH), 156-158 (AIG), and 169-171 (GIA) contribute to the substrate site. Cysteine 187 acts as the Acyl-thioester intermediate in catalysis.

It belongs to the LipB family.

The protein resides in the cytoplasm. It catalyses the reaction octanoyl-[ACP] + L-lysyl-[protein] = N(6)-octanoyl-L-lysyl-[protein] + holo-[ACP] + H(+). Its pathway is protein modification; protein lipoylation via endogenous pathway; protein N(6)-(lipoyl)lysine from octanoyl-[acyl-carrier-protein]: step 1/2. Catalyzes the transfer of endogenously produced octanoic acid from octanoyl-acyl-carrier-protein onto the lipoyl domains of lipoate-dependent enzymes. Lipoyl-ACP can also act as a substrate although octanoyl-ACP is likely to be the physiological substrate. This chain is Octanoyltransferase, found in Acidiphilium cryptum (strain JF-5).